The chain runs to 382 residues: Lactaldehyde reductase (382 aa).

NAD(+) is bound by residues Asp-38, Asn-70, 97 to 98 (GS), 139 to 143 (TTAGT), Asn-150, Lys-161, and 180 to 184 (MMDGM). The Fe cation site is built by Asp-195, His-199, His-262, and His-276.

The protein belongs to the iron-containing alcohol dehydrogenase family. Homodimer. The cofactor is Fe cation.

The catalysed reaction is (R)-propane-1,2-diol + NAD(+) = (R)-lactaldehyde + NADH + H(+). The enzyme catalyses (S)-propane-1,2-diol + NAD(+) = (S)-lactaldehyde + NADH + H(+). It participates in carbohydrate degradation; L-fucose degradation. The protein is Lactaldehyde reductase (fucO) of Escherichia coli O157:H7.